We begin with the raw amino-acid sequence, 699 residues long: Transcription factor MYC2 (699 aa).

Positions 25-60 (PWGAASTPPPPPPPPHHHHQQQQQQVLPPPAAAPAA) are disordered. The tract at residues 93–158 (IDVSTGASLL…AAPDEAVEEE (66 aa)) is JAZ-interaction domain. The disordered stretch occupies residues 290–530 (DISVSKPPPP…EPLNHVEAER (241 aa)). Polar residues predominate over residues 306–321 (HFENGSTSTLTENPSP). Composition is skewed to low complexity over residues 335 to 349 (PQRQ…QAQQ) and 387 to 412 (SSSG…PGSL). Polar residues-rich tracts occupy residues 413 to 449 (FSQH…NNHP) and 459 to 472 (SFSS…STGT). Basic and acidic residues predominate over residues 478-494 (SESDHSDLEASVREVES). The Nuclear localization signal signature appears at 506-514 (KRPRKRGRK). Over residues 507–516 (RPRKRGRKPA) the composition is skewed to basic residues. Residues 517-530 (NGREEPLNHVEAER) show a composition bias toward basic and acidic residues. The tract at residues 520-533 (EEPLNHVEAERQRR) is basic motif; degenerate. The bHLH domain occupies 520 to 569 (EEPLNHVEAERQRREKLNQRFYALRAVVPNVSKMDKASLLGDAISYINEL). The tract at residues 534–569 (EKLNQRFYALRAVVPNVSKMDKASLLGDAISYINEL) is helix-loop-helix motif. Residues 582–611 (TLQSQMESLKKERDARPPAPSGGGGDGGAR) are disordered.

It belongs to the bHLH protein family. As to quaternary structure, interacts with TIFY3/JAZ1. Highly expressed in spikelets and floral organs.

It localises to the nucleus. In terms of biological role, transcriptional activator involved in jasmonate (JA) signaling pathway during spikelet development. Binds to the G2 region G-box (5'-CACGTG-3') of the MADS1 promoter and thus directly regulates the expression of MADS1. Its function in MADS1 activation is abolished by TIFY3/JAZ1 which directly target MYC2 during spikelet development. This chain is Transcription factor MYC2, found in Oryza sativa subsp. japonica (Rice).